Reading from the N-terminus, the 617-residue chain is uncharacterized protein (617 aa).

The segment covering 387 to 396 has biased composition (polar residues); sequence NGGMSATQLP. Disordered regions lie at residues 387-419 and 443-599; these read NGGMSATQLPAPTRDSQRQAAANQFQQRTHAAP and YDDF…NNEQ. Positions 404 to 414 are enriched in low complexity; it reads RQAAANQFQQR. The segment covering 453–474 has biased composition (polar residues); that stretch reads QPLTQQQKDAARQRYQSASPEQ. Basic and acidic residues-rich tracts occupy residues 490 to 499 and 522 to 531; these read QRREAARERI and QRRDAARERI. A compositionally biased stretch (polar residues) spans 549–570; the sequence is RPLNQQQRDNARQRVQSASPEQ. Residues 572 to 585 are compositionally biased toward basic and acidic residues; sequence QVFREKVQESRPQR. The span at 586–599 shows a compositional bias: polar residues; sequence LNDSNHTVRLNNEQ.

This is an uncharacterized protein from Escherichia coli (strain K12).